Here is a 319-residue protein sequence, read N- to C-terminus: MITFLPIIFSILIVVIFVIGNFANGFIALVNSIEWVKRQKISFVDQILTALAVSRVGLLWVLLLHWYATQLNPAFYSVEVRITVYNVWAVTNHFSSWLATSLSMFYLLKIANFSNLIFLRIKRRVKSVVLVILLGPLLFLVCHLFVINMDETIWTKEYEGNMTWKIKLRSAMYHSNMTLTMLANFVPLTLTLISFLLLICSLCKHLKKMQLHGKGSQDPSTKVHIKALQTVTSFLLLCAIYFLSMIISVCNLGRLEKQPVFMFCQAIIFSYPSTHPFILILGNKKLKQIFLSVLWHVRYWVKDRSLRLHRFTRAALCKG.

Position 1 (methionine 1) is a topological domain, extracellular. The chain crosses the membrane as a helical span at residues isoleucine 2–phenylalanine 22. Residues alanine 23–glutamine 46 are Cytoplasmic-facing. Residues isoleucine 47–tyrosine 67 form a helical membrane-spanning segment. Over alanine 68–asparagine 86 the chain is Extracellular. Residues valine 87–leucine 107 form a helical membrane-spanning segment. The Cytoplasmic segment spans residues leucine 108 to lysine 126. The chain crosses the membrane as a helical span at residues serine 127–isoleucine 147. Residues asparagine 148–threonine 178 are Extracellular-facing. Residues asparagine 161 and asparagine 176 are each glycosylated (N-linked (GlcNAc...) asparagine). The chain crosses the membrane as a helical span at residues leucine 179–isoleucine 199. Residues cysteine 200 to glutamine 229 are Cytoplasmic-facing. Residues threonine 230 to cysteine 250 traverse the membrane as a helical segment. Topologically, residues asparagine 251–proline 259 are extracellular. Residues valine 260–isoleucine 280 traverse the membrane as a helical segment. Over leucine 281–glycine 319 the chain is Cytoplasmic.

This sequence belongs to the G-protein coupled receptor T2R family.

It is found in the membrane. Receptor that may play a role in the perception of bitterness and is gustducin-linked. May play a role in sensing the chemical composition of the gastrointestinal content. The activity of this receptor may stimulate alpha gustducin, mediate PLC-beta-2 activation and lead to the gating of TRPM5. The chain is Taste receptor type 2 member 30 (TAS2R30) from Pan troglodytes (Chimpanzee).